Reading from the N-terminus, the 199-residue chain is Isopentenyl-diphosphate Delta-isomerase (199 aa).

The Mn(2+) site is built by His40 and His47. One can recognise a Nudix hydrolase domain in the interval 45–186; that stretch reads PRHLAFSCHV…PALLSPWAVE (142 aa). Cys82 is an active-site residue. Mg(2+) is bound at residue Cys82. His84 serves as a coordination point for Mn(2+). Glu102 contributes to the Mg(2+) binding site. The Mn(2+) site is built by Glu131 and Glu133. Glu133 is an active-site residue.

Belongs to the IPP isomerase type 1 family. Requires Mg(2+) as cofactor. Mn(2+) is required as a cofactor.

It localises to the cytoplasm. The catalysed reaction is isopentenyl diphosphate = dimethylallyl diphosphate. The protein operates within isoprenoid biosynthesis; dimethylallyl diphosphate biosynthesis; dimethylallyl diphosphate from isopentenyl diphosphate: step 1/1. Functionally, catalyzes the 1,3-allylic rearrangement of the homoallylic substrate isopentenyl (IPP) to its highly electrophilic allylic isomer, dimethylallyl diphosphate (DMAPP). The chain is Isopentenyl-diphosphate Delta-isomerase from Cutibacterium acnes (strain DSM 16379 / KPA171202) (Propionibacterium acnes).